A 193-amino-acid polypeptide reads, in one-letter code: Potassium-transporting ATPase KdpC subunit (193 aa).

The helical transmembrane segment at 14–34 (ITFTFLVLCGLVYPLIVTGIA) threads the bilayer.

This sequence belongs to the KdpC family. In terms of assembly, the system is composed of three essential subunits: KdpA, KdpB and KdpC.

The protein resides in the cell membrane. Functionally, part of the high-affinity ATP-driven potassium transport (or Kdp) system, which catalyzes the hydrolysis of ATP coupled with the electrogenic transport of potassium into the cytoplasm. This subunit acts as a catalytic chaperone that increases the ATP-binding affinity of the ATP-hydrolyzing subunit KdpB by the formation of a transient KdpB/KdpC/ATP ternary complex. In Bacillus cereus (strain AH820), this protein is Potassium-transporting ATPase KdpC subunit.